Reading from the N-terminus, the 152-residue chain is Superoxide dismutase [Cu-Zn] 2 (152 aa).

3 residues coordinate Cu cation: His-45, His-47, and His-62. A disordered region spans residues Thr-53–Gly-81. Positions 62, 70, 79, and 82 each coordinate Zn(2+). A compositionally biased stretch (basic and acidic residues) spans Pro-65 to Gly-81. His-119 provides a ligand contact to Cu cation.

The protein belongs to the Cu-Zn superoxide dismutase family. Homodimer. Requires Cu cation as cofactor. It depends on Zn(2+) as a cofactor.

It localises to the cytoplasm. It carries out the reaction 2 superoxide + 2 H(+) = H2O2 + O2. Its function is as follows. Destroys radicals which are normally produced within the cells and which are toxic to biological systems. This is Superoxide dismutase [Cu-Zn] 2 (SODCC2) from Brassica juncea (Indian mustard).